Consider the following 245-residue polypeptide: Thiopurine S-methyltransferase (245 aa).

29–40 is a binding site for S-adenosyl-L-methionine; that stretch reads WQEKWVSRRIGF. F40 is a substrate binding site. K58 is modified (N6-acetyllysine). L69, E90, and R152 together coordinate S-adenosyl-L-methionine.

It belongs to the class I-like SAM-binding methyltransferase superfamily. TPMT family. Monomer.

It localises to the cytoplasm. The catalysed reaction is S-adenosyl-L-methionine + a thiopurine = S-adenosyl-L-homocysteine + a thiopurine S-methylether.. The polypeptide is Thiopurine S-methyltransferase (TPMT) (Canis lupus familiaris (Dog)).